Consider the following 904-residue polypeptide: Protein abrupt (904 aa).

Residues 1–15 (MTESTQLQTAENNNA) are compositionally biased toward polar residues. Disordered regions lie at residues 1-30 (MTES…TSSV) and 53-72 (GSAL…HQQQ). Residues 103-168 (VDVTLACDER…MYNGEVNVSH (66 aa)) form the BTB domain. Residues 204–238 (SHNSSNNNNNNSSSNNSLSNNNNNNNNNAESSNHN) show a composition bias toward low complexity. Disordered stretches follow at residues 204-287 (SHNS…LNSP), 349-390 (ASSA…PPPQ), 411-438 (LLDR…KDRE), and 451-501 (ALEN…NQRS). Over residues 239–253 (KISSYLSPNQTSAAC) the composition is skewed to polar residues. Low complexity predominate over residues 254-286 (NNSSNSNSNNHSSSHNNSSSNNISGSLNSSLNS). Residues 429–438 (SGRDTSKDRE) show a composition bias toward basic and acidic residues. Residues 452-461 (LENSNGQQAN) are compositionally biased toward polar residues. Residue Ser474 is modified to Phosphoserine. Residues 481-500 (PSDRGDGQHDGTLDGIDNQR) are compositionally biased toward basic and acidic residues. 2 C2H2-type zinc fingers span residues 544–567 (RPCP…EDKH) and 573–596 (YRCV…SRQH). Disordered regions lie at residues 633 to 696 (ELRA…GGSS) and 832 to 904 (AAGN…VHNT). Positions 642 to 655 (GGSGSSGGGGGGGS) are enriched in gly residues. Over residues 671–682 (DDAEDSDDDPED) the composition is skewed to acidic residues. Residues Ser837, Ser846, and Ser868 each carry the phosphoserine modification. Residues 851 to 868 (MGHDEMAENDGDMRREGS) show a composition bias toward basic and acidic residues. Over residues 876–886 (DNNQSGSNHEV) the composition is skewed to polar residues. Phosphoserine is present on residues Ser889 and Ser896.

In terms of tissue distribution, expressed in CNS midline cells during embryonic stages 9-13. Expression also seen in cells of the stomagastric nervous system. Segmentally repeated stripes of ectodermal expression appear at stage 11 that become uniform by stage 12 and throughout embryogenesis. Expressed at variable levels in somatic muscles from stage 16 and in all imaginal disks during larval development. Expression is seen in da neurons that grow in two-dimensional dendrites underneath the epidermis during late embryonic, larval, and pupal stages.

It is found in the nucleus. Expression is vital for development; may be involved in transcriptional regulation. In embryos, muscle specific expression is required for segmental nerve b (SNb) motoneuron target recognition within ventral longitudinal muscles. Has a role in establishing and maintaining embryonic muscle attachments, adult sensory cell formation (macrochaetae) and morphogenesis of adult appendages (legs, antenna aristae and male external genitalia). Has a role in the morphogenesis of the class I dendritic neurons: selective expression of ab in class I da neurons plays a pivotal role in forming dendritic arbors, which are characteristic of the class I cells. The development of more complex arbors of class II-IV neurons depends on the absence of ab. This Drosophila melanogaster (Fruit fly) protein is Protein abrupt (ab).